A 501-amino-acid polypeptide reads, in one-letter code: Glutamyl-tRNA(Gln) amidotransferase subunit A (501 aa).

Catalysis depends on charge relay system residues K80 and S155. The Acyl-ester intermediate role is filled by S179.

This sequence belongs to the amidase family. GatA subfamily. As to quaternary structure, heterotrimer of A, B and C subunits.

It carries out the reaction L-glutamyl-tRNA(Gln) + L-glutamine + ATP + H2O = L-glutaminyl-tRNA(Gln) + L-glutamate + ADP + phosphate + H(+). Its function is as follows. Allows the formation of correctly charged Gln-tRNA(Gln) through the transamidation of misacylated Glu-tRNA(Gln) in organisms which lack glutaminyl-tRNA synthetase. The reaction takes place in the presence of glutamine and ATP through an activated gamma-phospho-Glu-tRNA(Gln). In Cupriavidus taiwanensis (strain DSM 17343 / BCRC 17206 / CCUG 44338 / CIP 107171 / LMG 19424 / R1) (Ralstonia taiwanensis (strain LMG 19424)), this protein is Glutamyl-tRNA(Gln) amidotransferase subunit A.